A 201-amino-acid chain; its full sequence is Probable quinol oxidase subunit 3 (201 aa).

A run of 5 helical transmembrane segments spans residues 20-40, 62-82, 91-111, 133-153, and 172-192; these read LGFW…FATL, LVLI…IAIY, LMMF…GFEI, FFIL…WAIC, and FIVS…FTAV.

This sequence belongs to the cytochrome c oxidase subunit 3 family.

The protein localises to the cell membrane. The enzyme catalyses 2 a quinol + O2 = 2 a quinone + 2 H2O. Catalyzes quinol oxidation with the concomitant reduction of oxygen to water. The sequence is that of Probable quinol oxidase subunit 3 (qoxC) from Staphylococcus aureus (strain MSSA476).